Consider the following 1897-residue polypeptide: Spectinabilin polyketide synthase system protein NorA (1897 aa).

One can recognise a Ketosynthase family 3 (KS3) domain in the interval 112-536 (EEPIAIVGMG…GTNAHIILEQ (425 aa)). Catalysis depends on for beta-ketoacyl synthase activity residues cysteine 283, histidine 418, and histidine 458. The tract at residues 538–563 (APEPERPHAPEADGEPRPLPWPVSGH) is disordered. Residues 540 to 553 (EPERPHAPEADGEP) show a composition bias toward basic and acidic residues. The Malonyl-CoA:ACP transacylase (MAT) domain occupies 644–962 (FVFPGQGSQW…VAEAHVHGVA (319 aa)). Positions 1012–1139 (HPLLGAAIPL…GTLAPGGGHP (128 aa)) are N-terminal hotdog fold. The region spanning 1012-1289 (HPLLGAAIPL…MRPVTAEALH (278 aa)) is the PKS/mFAS DH domain. Histidine 1045 (proton acceptor; for dehydratase activity) is an active-site residue. A disordered region spans residues 1113–1152 (SRPEDAGADEPWTRHAEGTLAPGGGHPRQDPGPWPPTGAR). The segment at 1151 to 1289 (AREIDLDDCY…MRPVTAEALH (139 aa)) is C-terminal hotdog fold. Aspartate 1211 functions as the Proton donor; for dehydratase activity in the catalytic mechanism. The 178-residue stretch at 1494-1671 (GTVLVTGGLG…GVSMGWGMWA (178 aa)) folds into the Ketoreductase (KR) domain. The Carrier domain occupies 1777–1852 (ALLLGVVRGH…ALSRYLRTLL (76 aa)). At serine 1812 the chain carries O-(pantetheine 4'-phosphoryl)serine. Residues 1854-1873 (PDPAPAPTAPDGQPGPDQAD) are disordered. The segment covering 1862–1871 (APDGQPGPDQ) has biased composition (low complexity).

As to quaternary structure, the spectinabilin polyketide synthase complex is composed of 4 proteins, NorA, NorA', NorB and NorC. The complex comprises 6 modules with a total of 28 catalytic domains catalyzing 7 chain elongations. NorA comprises one module, NorA' two modules, NorB one module and NorC two modules. The cofactor is pantetheine 4'-phosphate.

The catalysed reaction is 4-nitrobenzoyl-CoA + 6 (S)-methylmalonyl-CoA + malonyl-CoA + 6 NADPH + 12 H(+) = demethyldeoxyspectinabilin + 7 CO2 + 6 NADP(+) + 8 CoA + 5 H2O. The protein operates within antibiotic biosynthesis. It functions in the pathway polyketide biosynthesis. In terms of biological role, component of a type I modular polyketide synthase (PKS) that generates the backbone of the antibiotic spectinabilin (also known as neoaureothin), a nitroaryl-substituted polyketide metabolite. This PKS system accepts the unusual starter unit 4-nitrobenzoyl-CoA and extends it by 6 molecules of (S)-methylmalonyl-CoA and a single molecule of malonyl-CoA. The first module, NorA, is used twice in an iterative fashion. The protein is Spectinabilin polyketide synthase system protein NorA of Streptomyces orinoci (Streptoverticillium orinoci).